Consider the following 64-residue polypeptide: Cytochrome c oxidase subunit 5C-2 (64 aa).

Residues 15-34 (SVVKELIIGLTLGLAAGGLW) traverse the membrane as a helical segment.

Belongs to the cytochrome c oxidase subunit 5C family.

It localises to the mitochondrion inner membrane. Its function is as follows. This protein is one of the nuclear-coded polypeptide chains of cytochrome c oxidase, the terminal oxidase in mitochondrial electron transport. This Arabidopsis thaliana (Mouse-ear cress) protein is Cytochrome c oxidase subunit 5C-2.